Reading from the N-terminus, the 307-residue chain is tRNA pseudouridine synthase B (307 aa).

Catalysis depends on Asp-38, which acts as the Nucleophile.

Belongs to the pseudouridine synthase TruB family. Type 1 subfamily.

The enzyme catalyses uridine(55) in tRNA = pseudouridine(55) in tRNA. Functionally, responsible for synthesis of pseudouridine from uracil-55 in the psi GC loop of transfer RNAs. The chain is tRNA pseudouridine synthase B from Bacillus cereus (strain ZK / E33L).